A 120-amino-acid polypeptide reads, in one-letter code: Fluoride-specific ion channel FluC (120 aa).

Helical transmembrane passes span 30–50, 66–86, and 96–116; these read FGTL…YGLL, VGFL…LLLL, and LNII…LQLV. Residues G70 and T73 each contribute to the Na(+) site.

This sequence belongs to the fluoride channel Fluc/FEX (TC 1.A.43) family.

It is found in the cell inner membrane. The catalysed reaction is fluoride(in) = fluoride(out). Its activity is regulated as follows. Na(+) is not transported, but it plays an essential structural role and its presence is essential for fluoride channel function. Its function is as follows. Fluoride-specific ion channel. Important for reducing fluoride concentration in the cell, thus reducing its toxicity. The protein is Fluoride-specific ion channel FluC of Pseudoalteromonas translucida (strain TAC 125).